We begin with the raw amino-acid sequence, 160 residues long: Small ribosomal subunit protein uS7 (160 aa).

The protein belongs to the universal ribosomal protein uS7 family. As to quaternary structure, part of the 30S ribosomal subunit. Contacts proteins S9 and S11.

Its function is as follows. One of the primary rRNA binding proteins, it binds directly to 16S rRNA where it nucleates assembly of the head domain of the 30S subunit. Is located at the subunit interface close to the decoding center, probably blocks exit of the E-site tRNA. The chain is Small ribosomal subunit protein uS7 from Rickettsia massiliae (strain Mtu5).